The chain runs to 149 residues: Ribosome maturation factor RimP (149 aa).

It belongs to the RimP family.

The protein localises to the cytoplasm. Functionally, required for maturation of 30S ribosomal subunits. This Clostridium acetobutylicum (strain ATCC 824 / DSM 792 / JCM 1419 / IAM 19013 / LMG 5710 / NBRC 13948 / NRRL B-527 / VKM B-1787 / 2291 / W) protein is Ribosome maturation factor RimP.